Consider the following 100-residue polypeptide: RxLR effector protein PITG_18683 (100 aa).

Positions 1-22 (MRSFLYGILAFAVLARSSAVAA) are cleaved as a signal peptide. A RxLR-dEER motif is present at residues 43–57 (RSLRVEAQEVIQSGR). The Calmodulin-binding motif motif lies at 78–82 (KPDIK).

This sequence belongs to the RxLR effector family. In terms of assembly, interacts with the host calmodulin.

The protein resides in the secreted. It localises to the host cell. Secreted effector that associates with calmodulin to interfere with plant defense-associated calcium signaling in hosts. This Phytophthora infestans (strain T30-4) (Potato late blight agent) protein is RxLR effector protein PITG_18683.